Consider the following 474-residue polypeptide: Aspartyl/glutamyl-tRNA(Asn/Gln) amidotransferase subunit B (474 aa).

The protein belongs to the GatB/GatE family. GatB subfamily. As to quaternary structure, heterotrimer of A, B and C subunits.

The enzyme catalyses L-glutamyl-tRNA(Gln) + L-glutamine + ATP + H2O = L-glutaminyl-tRNA(Gln) + L-glutamate + ADP + phosphate + H(+). It catalyses the reaction L-aspartyl-tRNA(Asn) + L-glutamine + ATP + H2O = L-asparaginyl-tRNA(Asn) + L-glutamate + ADP + phosphate + 2 H(+). Its function is as follows. Allows the formation of correctly charged Asn-tRNA(Asn) or Gln-tRNA(Gln) through the transamidation of misacylated Asp-tRNA(Asn) or Glu-tRNA(Gln) in organisms which lack either or both of asparaginyl-tRNA or glutaminyl-tRNA synthetases. The reaction takes place in the presence of glutamine and ATP through an activated phospho-Asp-tRNA(Asn) or phospho-Glu-tRNA(Gln). This chain is Aspartyl/glutamyl-tRNA(Asn/Gln) amidotransferase subunit B, found in Desulfotalea psychrophila (strain LSv54 / DSM 12343).